The sequence spans 598 residues: Elongation factor 4 (598 aa).

In terms of domain architecture, tr-type G spans 5–187 (SHIRNFSIIA…RLVATIPAPI (183 aa)). Residues 17-22 (DHGKST) and 134-137 (NKID) each bind GTP.

Belongs to the TRAFAC class translation factor GTPase superfamily. Classic translation factor GTPase family. LepA subfamily.

Its subcellular location is the cell inner membrane. It carries out the reaction GTP + H2O = GDP + phosphate + H(+). In terms of biological role, required for accurate and efficient protein synthesis under certain stress conditions. May act as a fidelity factor of the translation reaction, by catalyzing a one-codon backward translocation of tRNAs on improperly translocated ribosomes. Back-translocation proceeds from a post-translocation (POST) complex to a pre-translocation (PRE) complex, thus giving elongation factor G a second chance to translocate the tRNAs correctly. Binds to ribosomes in a GTP-dependent manner. This chain is Elongation factor 4, found in Pseudomonas fluorescens (strain Pf0-1).